The primary structure comprises 363 residues: Neurogenic differentiation factor 2 (363 aa).

Residues 1–116 (MLTRLFKEPS…VRRQKANARE (116 aa)) form a disordered region. Residues 28 to 44 (EDSKTKDEEQERCRLGD) show a composition bias toward basic and acidic residues. Positions 64 to 83 (AGEEDYDEDVDEDDCGEEGD) are enriched in acidic residues. The span at 87 to 98 (PKKRGPKKRKMT) shows a compositional bias: basic residues. A Nuclear localization signal motif is present at residues 93–99 (KKRKMTP). The bHLH domain occupies 107–159 (VRRQKANARERTRMHDLNSALDNLLKVVPCYSKTQKLSKIETLRLAKNYIWAL).

In terms of assembly, efficient DNA binding requires dimerization with another bHLH protein. In adult, expressed strongly in brain and more weakly in skin, muscle, eye and ovary.

It is found in the nucleus. Transcriptional regulator. Appears to mediate neuronal differentiation. The polypeptide is Neurogenic differentiation factor 2 (Danio rerio (Zebrafish)).